Reading from the N-terminus, the 205-residue chain is Ribosomal RNA large subunit methyltransferase E (205 aa).

The S-adenosyl-L-methionine site is built by Gly-50, Trp-52, Asp-67, Asn-83, and Asp-111. Catalysis depends on Lys-151, which acts as the Proton acceptor.

It belongs to the class I-like SAM-binding methyltransferase superfamily. RNA methyltransferase RlmE family.

It localises to the cytoplasm. The catalysed reaction is uridine(2552) in 23S rRNA + S-adenosyl-L-methionine = 2'-O-methyluridine(2552) in 23S rRNA + S-adenosyl-L-homocysteine + H(+). Its function is as follows. Specifically methylates the uridine in position 2552 of 23S rRNA at the 2'-O position of the ribose in the fully assembled 50S ribosomal subunit. This Thermoplasma acidophilum (strain ATCC 25905 / DSM 1728 / JCM 9062 / NBRC 15155 / AMRC-C165) protein is Ribosomal RNA large subunit methyltransferase E.